Here is a 250-residue protein sequence, read N- to C-terminus: 1-(5-phosphoribosyl)-5-[(5-phosphoribosylamino)methylideneamino] imidazole-4-carboxamide isomerase (250 aa).

Asp-8 functions as the Proton acceptor in the catalytic mechanism. The Proton donor role is filled by Asp-131.

Belongs to the HisA/HisF family.

Its subcellular location is the cytoplasm. It carries out the reaction 1-(5-phospho-beta-D-ribosyl)-5-[(5-phospho-beta-D-ribosylamino)methylideneamino]imidazole-4-carboxamide = 5-[(5-phospho-1-deoxy-D-ribulos-1-ylimino)methylamino]-1-(5-phospho-beta-D-ribosyl)imidazole-4-carboxamide. The protein operates within amino-acid biosynthesis; L-histidine biosynthesis; L-histidine from 5-phospho-alpha-D-ribose 1-diphosphate: step 4/9. In Paraburkholderia phytofirmans (strain DSM 17436 / LMG 22146 / PsJN) (Burkholderia phytofirmans), this protein is 1-(5-phosphoribosyl)-5-[(5-phosphoribosylamino)methylideneamino] imidazole-4-carboxamide isomerase.